Consider the following 364-residue polypeptide: Aspartate aminotransferase (364 aa).

The L-aspartate site is built by Gly23, Trp99, and Asn143. At Lys200 the chain carries N6-(pyridoxal phosphate)lysine. Arg320 is an L-aspartate binding site.

It belongs to the class-I pyridoxal-phosphate-dependent aminotransferase family. In terms of assembly, homodimer. Requires pyridoxal 5'-phosphate as cofactor.

The protein resides in the cytoplasm. The enzyme catalyses L-aspartate + 2-oxoglutarate = oxaloacetate + L-glutamate. The chain is Aspartate aminotransferase (aspC) from Thermococcus kodakarensis (strain ATCC BAA-918 / JCM 12380 / KOD1) (Pyrococcus kodakaraensis (strain KOD1)).